The sequence spans 444 residues: Divalent metal cation transporter MntH (444 aa).

11 helical membrane passes run 31 to 51 (GGHW…VSVG), 68 to 88 (FGYL…VLQG), 115 to 135 (LALW…EVIG), 146 to 166 (IPLT…LLLM), 175 to 195 (AFVM…IALA), 212 to 232 (VVTN…TVMP), 267 to 287 (VALM…AAVF), 303 to 323 (ALLA…VALL), 356 to 376 (LLTR…YGEA), 381 to 401 (LLVL…IPLV), and 413 to 433 (LVAP…IVGL).

The protein belongs to the NRAMP family.

It localises to the cell inner membrane. Its function is as follows. H(+)-stimulated, divalent metal cation uptake system. This chain is Divalent metal cation transporter MntH, found in Xanthomonas campestris pv. campestris (strain ATCC 33913 / DSM 3586 / NCPPB 528 / LMG 568 / P 25).